A 321-amino-acid polypeptide reads, in one-letter code: MSKILVIAEHRRNDLRPVSLELIGAANGLKKSGEDKVVVAVIGSQADAFVPALSVNGVDELVVVKGSSIDFDPDVFEASVSALIAAHNPSVVLLPHSVDSLGYASSLASKTGYGFATDVYIVEYQGDELVATRGGYNQKVNVEVDFPGKSTVVLTIRPSVFKPLEGAGSPVVSNVDAPSVQSRSQNKDYVEVGGGNDIDITTVDFIMSIGRGIGEETNVEQFRELADEAGATLCCSRPIADAGWLPKSRQVGQSGKVVGSCKLYVAMGISGSIQHMAGMKHVPTIIAVNTDPGASIFTIAKYGIVADIFDIEEELKAQLAA.

FAD is bound by residues Arg211, Ser236, Arg237, Gln250, Val251, Ser254, Gly255, Ser270, Ser272, Gln274, His275, Asn289, Asp307, and Ile308.

In terms of assembly, heterodimer of an alpha and a beta subunit. Forms a ternary complex with trimethylamine dehydrogenase. FAD is required as a cofactor.

Its function is as follows. Heterodimeric electron transfer flavoprotein that accepts electrons from trimethylamine dehydrogenase. It transfers the electrons to the main respiratory chain via ETF-ubiquinone oxidoreductase (ETF dehydrogenase). This chain is Electron transfer flavoprotein subunit alpha (etfA), found in Methylophilus methylotrophus (Bacterium W3A1).